Reading from the N-terminus, the 593-residue chain is Replication protein E1 (593 aa).

The short motif at 72-74 (KRK) is the Nuclear localization signal element. Residues 86–95 (LSPRLSAVHI) carry the Nuclear export signal motif. Phosphoserine; by host is present on S87. The segment at 134-297 (NQNGAECELN…TIVEHQLASA (164 aa)) is DNA-binding region. An SF3 helicase domain is found at 382–546 (EEWKEIVQFL…LPMSDKDEPL (165 aa)). An ATP-binding site is contributed by 422–429 (GPPDTGKS). Residue K503 forms a Glycyl lysine isopeptide (Lys-Gly) (interchain with G-Cter in SUMO) linkage.

It belongs to the papillomaviridae E1 protein family. As to quaternary structure, can form hexamers. Interacts with E2 protein; this interaction increases E1 DNA binding specificity. Interacts with host DNA polymerase subunit POLA2. Interacts with host single stranded DNA-binding protein RPA1. Interacts with host TOP1; this interaction stimulates the enzymatic activity of TOP1. Phosphorylated. Post-translationally, sumoylated.

It is found in the host nucleus. It carries out the reaction Couples ATP hydrolysis with the unwinding of duplex DNA by translocating in the 3'-5' direction.. The catalysed reaction is ATP + H2O = ADP + phosphate + H(+). Its function is as follows. ATP-dependent DNA 3'-5' helicase required for initiation of viral DNA replication. It forms a complex with the viral E2 protein. The E1-E2 complex binds to the replication origin which contains binding sites for both proteins. During the initial step, a dimer of E1 interacts with a dimer of protein E2 leading to a complex that binds the viral origin of replication with high specificity. Then, a second dimer of E1 displaces the E2 dimer in an ATP-dependent manner to form the E1 tetramer. Following this, two E1 monomers are added to each half of the site, which results in the formation of two E1 trimers on the viral ori. Subsequently, two hexamers will be created. The double hexamer acts as a bi-directional helicase machinery and unwinds the viral DNA and then recruits the host DNA polymerase to start replication. The sequence is that of Replication protein E1 from Human papillomavirus type 48.